Reading from the N-terminus, the 82-residue chain is ATP synthase subunit 9, mitochondrial (82 aa).

A run of 2 helical transmembrane segments spans residues 8–28 and 45–67; these read IGAG…GNVF and SFGY…PMMA.

The protein belongs to the ATPase C chain family. In terms of assembly, F-type ATPases have 2 components, CF(1) - the catalytic core - and CF(0) - the membrane proton channel. CF(1) has five subunits: alpha(3), beta(3), gamma(1), delta(1), epsilon(1). CF(0) has three main subunits: a, b and c.

Its subcellular location is the mitochondrion membrane. In terms of biological role, this protein is one of the chains of the nonenzymatic membrane component (F0) of mitochondrial ATPase. This is ATP synthase subunit 9, mitochondrial (ATP9) from Malus domestica (Apple).